Consider the following 241-residue polypeptide: Hybrid peroxiredoxin hyPrx5 (241 aa).

Residues 3–167 form the Thioredoxin domain; sequence SMEGKKVPQV…MLKYLAPQHQ (165 aa). Cys-49 serves as the catalytic Cysteine sulfenic acid (-SOH) intermediate; for peroxiredoxin activity. The region spanning 170-241 is the Glutaredoxin domain; sequence ESISIFTKPG…GSDDLEKYFA (72 aa). Cys-180 and Cys-183 are oxidised to a cystine.

In the N-terminal section; belongs to the peroxiredoxin family. Prx5 subfamily. The protein in the C-terminal section; belongs to the glutaredoxin family. As to quaternary structure, homotetramer; interconnecting Prx and Grx domains of different monomers.

The enzyme catalyses a hydroperoxide + 2 glutathione = an alcohol + glutathione disulfide + H2O. In terms of biological role, thiol-specific peroxidase that catalyzes the reduction of hydrogen peroxide and organic hydroperoxides to water and alcohols, respectively. Plays a role in cell protection against oxidative stress by detoxifying peroxides. In Haemophilus influenzae (strain ATCC 51907 / DSM 11121 / KW20 / Rd), this protein is Hybrid peroxiredoxin hyPrx5 (PGdx).